Reading from the N-terminus, the 434-residue chain is Transcription elongation factor B polypeptide 3 (434 aa).

Residues 142–161 (KPEPVDVHEQQASSSSMSYQ) are disordered. The segment covering 151–160 (QQASSSSMSY) has biased composition (polar residues). The BC box stretch occupies residues 221 to 230 (TLVSLCQTVL). The region spanning 237 to 281 (IDHVGIVPFDLLKPVLDHASTDQLRHILDVNPMLVEDADEMFHEM) is the F-box domain. The disordered stretch occupies residues 391-415 (ITPRGGGVPSTSRSRSNNNNNMNNG).

As to quaternary structure, heterotrimer of an A, B and C subunit.

The protein localises to the nucleus. In terms of biological role, SIII, also known as elongin, is a general transcription elongation factor that increases the RNA polymerase II transcription elongation past template-encoded arresting sites. Subunit A is transcriptionally active and its transcription activity is strongly enhanced by binding to the dimeric complex of the SIII regulatory subunits B and C (elongin BC complex). This Caenorhabditis elegans protein is Transcription elongation factor B polypeptide 3.